The chain runs to 508 residues: Catalase (508 aa).

Positions 1–21 (MHMSKSFLLISMGLASISVHA) are cleaved as a signal peptide. Catalysis depends on residues His72 and Asn145. Position 353 (Tyr353) interacts with heme. Residues 373–392 (PKSPVANHNQDGPSNNSTGL) are compositionally biased toward polar residues. Residues 373 to 396 (PKSPVANHNQDGPSNNSTGLGNVD) form a disordered region.

It belongs to the catalase family. It depends on heme as a cofactor.

The protein resides in the periplasm. The catalysed reaction is 2 H2O2 = O2 + 2 H2O. Functionally, decomposes hydrogen peroxide into water and oxygen; serves to protect cells from the toxic effects of hydrogen peroxide. The protein is Catalase of Vibrio vulnificus (strain CMCP6).